The chain runs to 689 residues: MQNIDLISEEEAQKLLEELADKIAAYNHAYYIEDNPLVSDSEYDQLFNTNLKLEQKFPHLILENSPSKKVGAKIANKFAKVTHQVPMLSLSNAFDEQDVRDFVDRIKIFLRLNEFAPIFCEPKIDGLSFSAVYKHGVLTTGATRGDGYVGEDITANIKTIKNFPHKIDNVPEFLEVRGEIYIEKQDFLNLNKEQDEQGKDKFANPRNAAAGSLRQLDSSITAKRPLKYFVYSGGVTEQNLASSQDQLLTKLKECGFNINEISKLASSEEEIFAFYEYLKTNRENLPYEIDGVVYKLNDFVLQNRMGFIARSPRFATAHKFPAIIGQTKLLSITVQVGRTGTLTPVAELEPIEIGGVTVSRATLHNFQEIARKDLRIKDYVFLQRAGDVIPKIMGVDFDKRPNDTETFDTPLFCLSCNSKLHYTPEDIIIRCDNGLNCPAQNYERIRHFVSKNAMDIEGLGRKQVEFLIDKGLISNPLDIFFLKEKNDSSLAKLENMDGWGKKSVENLFKNIEKSKNVSLPRFIYALGIRHIGEQNAKLLAREFGSYNNFIAQMELLRTNEPDIYQKLNNLEGIGDKILVDIIDFFDVKENIELIKKLGGILNIEDYKETREQSSLTDKIVVFTGSLSTISRAEAKATAEKLGAKVAVGVSSNTDLVVAGVGAGSKLKKAKELNIKIIDEEEWLTLIKNV.

Residues 40-44 (DSEYD), 89-90 (SL), and glutamate 121 contribute to the NAD(+) site. The active-site N6-AMP-lysine intermediate is lysine 123. Positions 144, 179, 295, and 319 each coordinate NAD(+). Zn(2+) is bound by residues cysteine 413, cysteine 416, cysteine 431, and cysteine 437. The region spanning 610–689 (REQSSLTDKI…EEWLTLIKNV (80 aa)) is the BRCT domain.

The protein belongs to the NAD-dependent DNA ligase family. LigA subfamily. Mg(2+) is required as a cofactor. It depends on Mn(2+) as a cofactor.

It catalyses the reaction NAD(+) + (deoxyribonucleotide)n-3'-hydroxyl + 5'-phospho-(deoxyribonucleotide)m = (deoxyribonucleotide)n+m + AMP + beta-nicotinamide D-nucleotide.. DNA ligase that catalyzes the formation of phosphodiester linkages between 5'-phosphoryl and 3'-hydroxyl groups in double-stranded DNA using NAD as a coenzyme and as the energy source for the reaction. It is essential for DNA replication and repair of damaged DNA. This is DNA ligase from Rickettsia africae (strain ESF-5).